The primary structure comprises 329 residues: Phosphate import ATP-binding protein PstB (329 aa).

In terms of domain architecture, ABC transporter spans 83–325 (FEIENLNFWY…PKQKETNRYI (243 aa)). Position 116 to 123 (116 to 123 (GKSGCGKS)) interacts with ATP.

Belongs to the ABC transporter superfamily. Phosphate importer (TC 3.A.1.7) family. As to quaternary structure, the complex is composed of two ATP-binding proteins (PstB), two transmembrane proteins (PstC and PstA) and a solute-binding protein (PstS).

The protein localises to the cell membrane. It catalyses the reaction phosphate(out) + ATP + H2O = ADP + 2 phosphate(in) + H(+). Its function is as follows. Part of the ABC transporter complex PstSACB involved in phosphate import. Responsible for energy coupling to the transport system. This is Phosphate import ATP-binding protein PstB from Mycoplasma pneumoniae (strain ATCC 29342 / M129 / Subtype 1) (Mycoplasmoides pneumoniae).